The chain runs to 248 residues: Opiorphin prepropeptide (248 aa).

Positions 1 to 21 (MKLTFFLGLLALISCFTPSES) are cleaved as a signal peptide. Gln-22 carries the post-translational modification Pyrrolidone carboxylic acid. A disordered region spans residues 150–198 (DTTITTNPPTTATATTSTSTKPTMTISSSTVPISSTPEPATSISAATPA). Asn-218 carries N-linked (GlcNAc...) asparagine glycosylation.

Belongs to the PROL1/PROL3 family. Abundantly expressed in lacrimal gland where it found in the secretory endpieces. Also expressed at modest levels in the submandibular gland.

Its subcellular location is the secreted. Its function is as follows. Opiorphin is an endogenous inhibitor of neprilysin and aminopeptidase N. Inhibits the breakdown of substance P, Mca-BK2 and Met-enkephalin by neprilysin in vitro with IC(50) values of 29 uM, 33 uM and 33 uM respectively. Inhibits the breakdown of Ala-pNA by aminopeptidase N in vitro with an IC(50) of 65 uM. Has a potent analgesic effect when administered to rats by intravenous injection. The sequence is that of Opiorphin prepropeptide from Homo sapiens (Human).